The chain runs to 371 residues: Maltose/maltodextrin import ATP-binding protein MalK (371 aa).

The ABC transporter domain occupies 4 to 234 (VQLQNVTKAW…PADRFVAGFI (231 aa)). 36–43 (GPSGCGKS) contacts ATP.

This sequence belongs to the ABC transporter superfamily. Maltooligosaccharide importer (TC 3.A.1.1.1) family. The complex is composed of two ATP-binding proteins (MalK), two transmembrane proteins (MalG and MalK) and a solute-binding protein (MalE).

It is found in the cell inner membrane. The catalysed reaction is D-maltose(out) + ATP + H2O = D-maltose(in) + ADP + phosphate + H(+). Functionally, part of the ABC transporter complex MalEFGK involved in maltose/maltodextrin import. Responsible for energy coupling to the transport system. This is Maltose/maltodextrin import ATP-binding protein MalK from Shigella flexneri serotype 5b (strain 8401).